A 530-amino-acid chain; its full sequence is uncharacterized protein (530 aa).

Residues 485-529 (SKEENREIKLSIRENKEKQRKKSVEKSVSKLQNQLNRLLNKNTIE) are a coiled coil.

This is an uncharacterized protein from Acanthamoeba polyphaga (Amoeba).